The chain runs to 295 residues: Dual specificity protein phosphatase 15 (295 aa).

Positions 1–141 constitute a Tyrosine-protein phosphatase domain; it reads MTEGVLPGLY…LEEFGWASSQ (141 aa). The N-myristoyl glycine moiety is linked to residue Thr2. Residue Cys85 is the Phosphocysteine intermediate of the active site. The span at 251-270 shows a compositional bias: polar residues; the sequence is SSSCTLSASTERPDGSSTPG. Residues 251 to 272 form a disordered region; sequence SSSCTLSASTERPDGSSTPGNP.

Belongs to the protein-tyrosine phosphatase family. Non-receptor class dual specificity subfamily. In terms of tissue distribution, highly expressed in testis. Expressed in brain; up-regulated in patients with multiple sclerosis gray matter lesions.

The protein resides in the cytoplasm. It localises to the cell membrane. It catalyses the reaction O-phospho-L-tyrosyl-[protein] + H2O = L-tyrosyl-[protein] + phosphate. It carries out the reaction O-phospho-L-seryl-[protein] + H2O = L-seryl-[protein] + phosphate. The enzyme catalyses O-phospho-L-threonyl-[protein] + H2O = L-threonyl-[protein] + phosphate. In terms of biological role, may dephosphorylate MAPK13, ATF2, ERBB3, PDGFRB and SNX6. Functionally, may play a role in the regulation of oligodendrocyte differentiation. May play a role in the regulation of myelin formation. Involved in the regulation of Erk1/2 phosphorylation in Schwann cells; the signaling may be linked to the regulation of myelination. This is Dual specificity protein phosphatase 15 from Homo sapiens (Human).